The sequence spans 398 residues: Phospholipase C (398 aa).

A signal peptide spans 1–28; sequence MKRKIYKLLICATIATSLWAVRTTKVYA. Zn(2+) is bound by residues Trp29, His39, Asp84, His96, His154, Asp158, His164, His176, and Glu180. The Zn-dependent PLC domain maps to 29–278; that stretch reads WDGKADGTGT…HDVSDGKDSS (250 aa). The segment at 275–283 is linker; the sequence is KDSSANKNV. The PLAT domain maps to 284–398; it reads NELVAYITTG…ISGNSTYNIK (115 aa). Positions 299, 300, 301, 321, 322, 324, 325, 326, and 365 each coordinate Ca(2+).

It depends on Ca(2+) as a cofactor. The cofactor is Zn(2+).

The protein resides in the secreted. It carries out the reaction a 1,2-diacyl-sn-glycero-3-phosphocholine + H2O = phosphocholine + a 1,2-diacyl-sn-glycerol + H(+). Bacterial hemolysins are exotoxins that attack blood cell membranes and cause cell rupture. Constitutes an essential virulence factor in gas gangrene. Binds to eukaryotic membranes where it hydrolyzes both phosphatidylcholine and sphingomyelin, causing cell rupture. The diacylglycerol produced can activate both the arachidonic acid pathway, leading to modulation of the inflammatory response cascade and thrombosis, and protein kinase C, leading to activation of eukaryotic phospholipases and further membrane damage. The chain is Phospholipase C (plc) from Clostridium perfringens.